Consider the following 271-residue polypeptide: 2-dehydro-3-deoxyphosphooctonate aldolase (271 aa).

It belongs to the KdsA family.

It is found in the cytoplasm. The catalysed reaction is D-arabinose 5-phosphate + phosphoenolpyruvate + H2O = 3-deoxy-alpha-D-manno-2-octulosonate-8-phosphate + phosphate. It participates in carbohydrate biosynthesis; 3-deoxy-D-manno-octulosonate biosynthesis; 3-deoxy-D-manno-octulosonate from D-ribulose 5-phosphate: step 2/3. It functions in the pathway bacterial outer membrane biogenesis; lipopolysaccharide biosynthesis. This is 2-dehydro-3-deoxyphosphooctonate aldolase from Campylobacter jejuni subsp. jejuni serotype O:6 (strain 81116 / NCTC 11828).